The chain runs to 413 residues: Putative ankyrin repeat protein L92 (413 aa).

8 ANK repeats span residues 1–28 (MCAC…DINC), 32–67 (DGMS…DVNL), 68–104 (TVDG…LFES), 105–134 (DDDD…NIEA), 137–170 (DGET…KTNI), 174–208 (DRKT…NINY), 212–242 (IGET…NPNI), and 246–275 (SGNT…SPEI).

In Acanthamoeba polyphaga mimivirus (APMV), this protein is Putative ankyrin repeat protein L92.